A 477-amino-acid polypeptide reads, in one-letter code: Tripartite motif-containing protein 72 (477 aa).

16 residues coordinate Zn(2+): cysteine 14, cysteine 17, cysteine 29, histidine 31, cysteine 34, cysteine 37, cysteine 53, cysteine 56, cysteine 86, histidine 89, cysteine 97, aspartate 100, cysteine 105, cysteine 108, histidine 114, and histidine 117. An RING-type zinc finger spans residues cysteine 14–glutamine 57. The B box-type zinc finger occupies valine 81–alanine 122. Residues glutamine 135–lysine 232 adopt a coiled-coil conformation. Serine 255 carries the post-translational modification Phosphoserine. Residues aspartate 271–glutamine 475 form the B30.2/SPRY domain.

It belongs to the TRIM/RBCC family. Homodimer. Homooligomer; disulfide-linked. Oligomerizes on the phospholipid membrane. Interacts with DYSF and CAV3. In terms of processing, disulfide bond formation at Cys-242 occurs in case of membrane damage that cause the entry of the oxidized milieu of the extracellular space, resulting in homooligomerization. In terms of tissue distribution, muscle-specific.

It localises to the cell membrane. The protein resides in the sarcolemma. It is found in the cytoplasmic vesicle membrane. The catalysed reaction is S-ubiquitinyl-[E2 ubiquitin-conjugating enzyme]-L-cysteine + [acceptor protein]-L-lysine = [E2 ubiquitin-conjugating enzyme]-L-cysteine + N(6)-ubiquitinyl-[acceptor protein]-L-lysine.. The protein operates within protein modification; protein ubiquitination. With respect to regulation, specifically binds phosphatidylserine. The binding to phospholipids enhances ubiquitination activity. Its function is as follows. Muscle-specific E3 ubiquitin-protein ligase that plays a central role in cell membrane repair by nucleating the assembly of the repair machinery at injury sites. Its ubiquitination activity is mediated by E2 ubiquitin-conjugating enzymes UBE2D1, UBE2D2 and UBE2D3. Acts as a sensor of oxidation: upon membrane damage, entry of extracellular oxidative environment results in disulfide bond formation and homooligomerization at the injury site. This oligomerization acts as a nucleation site for recruitment of TRIM72-containing vesicles to the injury site, leading to membrane patch formation. Probably acts upstream of the Ca(2+)-dependent membrane resealing process. Required for transport of DYSF to sites of cell injury during repair patch formation. Regulates membrane budding and exocytosis. May be involved in the regulation of the mobility of KCNB1-containing endocytic vesicles. The polypeptide is Tripartite motif-containing protein 72 (Oryctolagus cuniculus (Rabbit)).